Here is a 111-residue protein sequence, read N- to C-terminus: Colipase (111 aa).

The N-terminal stretch at 1–17 is a signal peptide; that stretch reads MEKVLALVLLTLAVAYA. Residues 18–22 constitute a propeptide, enterostatin, activation peptide; sequence APDPR. 5 disulfide bridges follow: C34-C45, C40-C56, C44-C78, C66-C86, and C80-C104.

It belongs to the colipase family. In terms of assembly, forms a 1:1 stoichiometric complex with pancreatic lipase. As to expression, expressed by the pancreas.

Its subcellular location is the secreted. Its function is as follows. Colipase is a cofactor of pancreatic lipase. It allows the lipase to anchor itself to the lipid-water interface. Without colipase the enzyme is washed off by bile salts, which have an inhibitory effect on the lipase. Enterostatin has a biological activity as a satiety signal. This Myocastor coypus (Coypu) protein is Colipase (CLPS).